A 722-amino-acid polypeptide reads, in one-letter code: Mating-type switching protein swi2 (722 aa).

Disordered regions lie at residues 1-35 and 301-342; these read MNVNKKQESIPVNTGSESISSNDNERFEQGKGVGS and SEEF…PLPS. Positions 9–22 are enriched in polar residues; sequence SIPVNTGSESISSN. Over residues 302 to 316 the composition is skewed to acidic residues; that stretch reads EEFDFEPSREDEDFP. The segment covering 319–332 has biased composition (polar residues); it reads TSDSTGQDPLSSEP.

In terms of assembly, interacts with swi5 and rhp51.

Required for normal mating-type switching. The polypeptide is Mating-type switching protein swi2 (swi2) (Schizosaccharomyces pombe (strain 972 / ATCC 24843) (Fission yeast)).